We begin with the raw amino-acid sequence, 142 residues long: Transcription antitermination protein NusB (142 aa).

The protein belongs to the NusB family.

Involved in transcription antitermination. Required for transcription of ribosomal RNA (rRNA) genes. Binds specifically to the boxA antiterminator sequence of the ribosomal RNA (rrn) operons. This is Transcription antitermination protein NusB from Streptococcus uberis (strain ATCC BAA-854 / 0140J).